A 311-amino-acid polypeptide reads, in one-letter code: Malate dehydrogenase (311 aa).

NAD(+)-binding positions include 7–13 (GAAGGIG) and D34. R81 and R87 together coordinate substrate. Residues N94 and 117–119 (ITN) each bind NAD(+). Substrate-binding residues include N119 and R153. H177 acts as the Proton acceptor in catalysis. M227 provides a ligand contact to NAD(+).

The protein belongs to the LDH/MDH superfamily. MDH type 1 family. Homodimer.

It catalyses the reaction (S)-malate + NAD(+) = oxaloacetate + NADH + H(+). Functionally, catalyzes the reversible oxidation of malate to oxaloacetate. This is Malate dehydrogenase from Vibrio atlanticus (strain LGP32) (Vibrio splendidus (strain Mel32)).